The primary structure comprises 174 residues: Ribosome maturation factor RimM (174 aa).

In terms of domain architecture, PRC barrel spans Ala-98–Leu-172.

It belongs to the RimM family. As to quaternary structure, binds ribosomal protein uS19.

It is found in the cytoplasm. Its function is as follows. An accessory protein needed during the final step in the assembly of 30S ribosomal subunit, possibly for assembly of the head region. Essential for efficient processing of 16S rRNA. May be needed both before and after RbfA during the maturation of 16S rRNA. It has affinity for free ribosomal 30S subunits but not for 70S ribosomes. The chain is Ribosome maturation factor RimM from Lactiplantibacillus plantarum (strain ATCC BAA-793 / NCIMB 8826 / WCFS1) (Lactobacillus plantarum).